The primary structure comprises 341 residues: MFAKVAFKNFTPLKSIAPRSFSTTSSRAFKVAVLGAGGGIGQPLSMLLKLNDKVSELALFDIRGAPGVAADIGHINTTSNVVGYAPDDKGLEKALNGADVVIIPAGVPRKPGMTRDDLFATNASIVRDLAFAAGETCPEAKYLVVTNPVNSTVPIFKKALERVGVHQPKHLFGVTTLDSVRASRFTSQVTNGKAELLHIPVVGGHSGATIVPLLSQGGVELTGEKRDALIHRIQFGGDEVVKAKAGAGSATLSMAYAGARMASSVLRALAGESGVEECTFVESPLYKDQGIDFFASRVTLGKDGVDTIHPVGKINDYEESLLKVALGELKKSITKGEQFVA.

Residues 35 to 41 (GAGGGIG) and Asp61 contribute to the NAD(+) site. Residues Arg109 and Arg115 each coordinate substrate. Asn122 contributes to the NAD(+) binding site. Residues Asn147 and Arg181 each contribute to the substrate site. His205 functions as the Proton acceptor in the catalytic mechanism. Residue Met254 participates in NAD(+) binding.

This sequence belongs to the LDH/MDH superfamily. MDH type 1 family. In terms of assembly, homodimer.

It is found in the mitochondrion matrix. It carries out the reaction (S)-malate + NAD(+) = oxaloacetate + NADH + H(+). In Schizosaccharomyces pombe (strain 972 / ATCC 24843) (Fission yeast), this protein is Malate dehydrogenase, mitochondrial (MDH1).